A 498-amino-acid polypeptide reads, in one-letter code: Minor fimbrium subunit Mfa1 (498 aa).

The signal sequence occupies residues 1–19 (MKLNKMFLVGALLSLGFAS). A lipid anchor (N-palmitoyl cysteine) is attached at Cys20. Cys20 carries S-diacylglycerol cysteine lipidation. Positions 20–50 (CSKEGNGPAPDSSSTADTHMSVSMSLPQHNR) are excised as a propeptide. The interval 436 to 476 (SGNPFVPTDPDPNNPDTPDNPDTPDPEDPDTPNPEEPLPVQ) is disordered.

This sequence belongs to the bacteroidetes fimbrillin superfamily. FimA/Mfa1 family. As to quaternary structure, structural component of the fimbrial stalk. Minor fimbriae are composed of a structural subunit, such as the 53 kDa fimbrillin, and the accessory subunits Mfa3, Mfa4 and Mfa5. Fimbrium assembly occurs by linear, head-to-tail oligomerization of fimbrial subunits. This is mediated via insertion of a C-terminal beta-strand from one subunit into a groove in the N-terminal domain of the following subunit.

The protein localises to the fimbrium. It localises to the cell outer membrane. In terms of biological role, structural subunit of the minor fimbriae. These filamentous pili are attached to the cell surface; they mediate biofilm formation, adhesion onto host cells and onto other bacteria that are part of the oral microbiome. They play an important role in invasion of periodontal tissues and are recognized as major virulence factors. Mfa1 orthologs from different strains have highly divergent sequences, and this correlates with pathogenicity. This Porphyromonas gingivalis (Bacteroides gingivalis) protein is Minor fimbrium subunit Mfa1.